We begin with the raw amino-acid sequence, 292 residues long: MSHRHTAYVGRFAPSPTGPLHFGSLITAIASYCDAKVHQGKWLVRIEDTDIPRIYPGSEAHILACIDAFGFQPDGEILFQRDRLDLYENVLEQLKAQNLVYACQCTRKMLGSNAIYSGTCRNLNLPFQNQAIRVKVKDQLICFDDRLQGIQCSNLAHDLGDFVLKRRDGIINYQLAVVVDDYMQGMTHVVRGADLLDNTQRQIWLGDLLGYPRLHYLHLPLAMNAQGQKLSKQNMAAALDLSKASQYIQQSLAALHQPAVDLDTPDRMLKQAVAQWQLNHIPHQTRLAGTYL.

L-glutamate-binding positions include 11–15 (RFAPS) and E47. A 'HIGH' region motif is present at residues 14 to 24 (PSPTGPLHFGS). The Zn(2+) site is built by C103, C105, Y116, and C120. Positions 173 and 191 each coordinate L-glutamate. The 'KMSKS' region signature appears at 229–233 (KLSKQ). Residue K232 coordinates ATP.

The protein belongs to the class-I aminoacyl-tRNA synthetase family. GluQ subfamily. It depends on Zn(2+) as a cofactor.

Functionally, catalyzes the tRNA-independent activation of glutamate in presence of ATP and the subsequent transfer of glutamate onto a tRNA(Asp). Glutamate is transferred on the 2-amino-5-(4,5-dihydroxy-2-cyclopenten-1-yl) moiety of the queuosine in the wobble position of the QUC anticodon. In Acinetobacter baylyi (strain ATCC 33305 / BD413 / ADP1), this protein is Glutamyl-Q tRNA(Asp) synthetase.